A 612-amino-acid chain; its full sequence is Elongation factor 4 (612 aa).

Positions 12–194 (SRIRNFSIIA…QIVEKVPAPT (183 aa)) constitute a tr-type G domain. GTP is bound by residues 24-29 (DHGKST) and 141-144 (NKID).

It belongs to the TRAFAC class translation factor GTPase superfamily. Classic translation factor GTPase family. LepA subfamily.

Its subcellular location is the cell membrane. It catalyses the reaction GTP + H2O = GDP + phosphate + H(+). In terms of biological role, required for accurate and efficient protein synthesis under certain stress conditions. May act as a fidelity factor of the translation reaction, by catalyzing a one-codon backward translocation of tRNAs on improperly translocated ribosomes. Back-translocation proceeds from a post-translocation (POST) complex to a pre-translocation (PRE) complex, thus giving elongation factor G a second chance to translocate the tRNAs correctly. Binds to ribosomes in a GTP-dependent manner. The protein is Elongation factor 4 of Bacillus subtilis (strain 168).